Consider the following 257-residue polypeptide: Urease accessory protein UreD (257 aa).

The protein belongs to the UreD family. In terms of assembly, ureD, UreF and UreG form a complex that acts as a GTP-hydrolysis-dependent molecular chaperone, activating the urease apoprotein by helping to assemble the nickel containing metallocenter of UreC. The UreE protein probably delivers the nickel.

The protein resides in the cytoplasm. Functionally, required for maturation of urease via the functional incorporation of the urease nickel metallocenter. In Ruegeria pomeroyi (strain ATCC 700808 / DSM 15171 / DSS-3) (Silicibacter pomeroyi), this protein is Urease accessory protein UreD.